The primary structure comprises 259 residues: MNRFENKIIIITGAAGGIGASTTRRIVSEGGKVVIADYSREKADQFAAELSNSGADVRPVYFSATELKSCKELITFTMKEYGQIDVLVNNVGGTNPRRDTNIETLDMDYFDEAFHLNLSCTMYLSQLVIPIMSTQGGGNIVNVASISGITADSNGTLYGASKAGVINLTKYIATQTGKKNIRCNAVAPGLILTPAALNNLNEEVRKIFLGQCATPYLGEPQDVAATIAFLASEDARYITGQTIVVDGGLTIHNPTINLV.

Residues isoleucine 18, 37–38 (DY), and asparagine 90 each bind NAD(+). Glycochenodeoxycholate contacts are provided by serine 145 and tyrosine 158. NAD(+) is bound by residues tyrosine 158, lysine 162, and 191–193 (ILT). Tyrosine 158 (proton acceptor) is an active-site residue.

Belongs to the short-chain dehydrogenases/reductases (SDR) family. Homotetramer.

The enzyme catalyses cholate + NAD(+) = 3alpha,12alpha-dihydroxy-7-oxo-5beta-cholanate + NADH + H(+). It catalyses the reaction chenodeoxycholate + NAD(+) = 7-oxolithocholate + NADH + H(+). The catalysed reaction is taurochenodeoxycholate + NAD(+) = 7-oxotaurolithocholate + NADH + H(+). It carries out the reaction glycochenodeoxycholate + NAD(+) = 7-oxoglycolithocholate + NADH + H(+). The enzyme catalyses taurocholate + NAD(+) = 7-oxo-taurodeoxycholate + NADH + H(+). It catalyses the reaction glycocholate + NAD(+) = 7-oxo-glycodeoxycholate + NADH + H(+). The catalysed reaction is an aromatic primary alcohol + NAD(+) = an aromatic aldehyde + NADH + H(+). It carries out the reaction benzyl alcohol + NAD(+) = benzaldehyde + NADH + H(+). The enzyme catalyses 4-cyanobenzyl alcohol + NAD(+) = 4-cyanobenzaldehyde + NADH + H(+). It catalyses the reaction 4-acetoxybenzyl alcohol + NAD(+) = 4-acetoxybenzaldehyde + NADH + H(+). The catalysed reaction is 4-(trifluoromethyl)benzyl alcohol + NAD(+) = 4-(trifluoromethyl)benzaldehyde + NADH + H(+). 7alpha-hydroxysteroid dehydrogenase involved in the metabolism of bile acids in the gut. Catalyzes the NAD(+)-dependent oxidation of the 7alpha-hydroxy group of 7alpha-hydroxysteroids, such as cholate, chenodeoxycholate, taurochenodeoxycholate, glycochenodeoxycholate, taurocholate and glycocholate, to the corresponding 7-oxosteroids. Since it is also able to catalyze the reduction of nonsteroidal carbonyl compounds such as various benzaldehyde analogs to their corresponding benzyl alcohols, this enzyme may also function in the detoxification of xenobiotics containing carbonyl groups in the large intestine. This chain is 7alpha-hydroxysteroid dehydrogenase, found in Bacteroides fragilis (strain ATCC 25285 / DSM 2151 / CCUG 4856 / JCM 11019 / LMG 10263 / NCTC 9343 / Onslow / VPI 2553 / EN-2).